The primary structure comprises 360 residues: Metalloendoproteinase 5-MMP (360 aa).

A signal peptide spans 1 to 20 (MRTLLLTILIFFFTVNPISA). A propeptide spans 21 to 142 (KFYTNVSSIP…GGKILRTTEK (122 aa)) (activation peptide). N25, N36, and N78 each carry an N-linked (GlcNAc...) asparagine glycan. The Cysteine switch signature appears at 117–124 (PRCGNPDL). C119 serves as a coordination point for Zn(2+). N-linked (GlcNAc...) asparagine glycans are attached at residues N168 and N191. H270 serves as a coordination point for Zn(2+). E271 is an active-site residue. Zn(2+) contacts are provided by H274 and H280. The tract at residues 312-336 (LYGGNPNGDGGGSKPSRESQSTGGD) is disordered. A lipid anchor (GPI-anchor amidated serine) is attached at S337. A propeptide spans 338–360 (VRRWRGWMISLSSIATCIFLISV) (removed in mature form).

This sequence belongs to the peptidase M10A family. Matrix metalloproteinases (MMPs) subfamily. The cofactor is Zn(2+). Mostly expressed in leaves, roots and stems, and, to a lower extent, in flowers.

The protein localises to the cell membrane. With respect to regulation, repressed by acetohydroxamic acid (AHA). Its function is as follows. Matrix metalloproteinases (MMPs) or matrixins may play a role in the degradation and remodeling of the extracellular matrix (ECM) during development or in response to stresses. Active on Mca-KESAbuNLFVLKDpaR-NH(2) (QF75) and, to some extent, on McaPLGLDpaAR-NH(2) (QF24), myelin basic protein (MBP) and beta-casein. This Arabidopsis thaliana (Mouse-ear cress) protein is Metalloendoproteinase 5-MMP.